An 89-amino-acid chain; its full sequence is Small ribosomal subunit protein uS19 (89 aa).

The protein belongs to the universal ribosomal protein uS19 family.

Functionally, protein S19 forms a complex with S13 that binds strongly to the 16S ribosomal RNA. This Ruthia magnifica subsp. Calyptogena magnifica protein is Small ribosomal subunit protein uS19.